Here is a 224-residue protein sequence, read N- to C-terminus: MAFYPLQIAGLVLGFLGMVGTLATTLLPQWRVSAFVGSNIIVFERLWEGLWMNCIRQARVRLQCKFYSSLLALPPALETARALMCVAVALSLIALLIGICGMKQVQCTGSNERAKAYLLGTSGVLFILTGIFVLIPVSWTANIIIRDFYNPAIHIGQKRELGAALFLGWASAAVLFIGGGLLCGFCCCNRKKQGYRYPVPGYRVPHTDKRRNTTMLSKTSTSYV.

The Cytoplasmic segment spans residues 1 to 7; the sequence is MAFYPLQ. A helical transmembrane segment spans residues 8–28; it reads IAGLVLGFLGMVGTLATTLLP. At 29–81 the chain is on the extracellular side; that stretch reads QWRVSAFVGSNIIVFERLWEGLWMNCIRQARVRLQCKFYSSLLALPPALETAR. Residues 82–102 traverse the membrane as a helical segment; sequence ALMCVAVALSLIALLIGICGM. The Cytoplasmic portion of the chain corresponds to 103-124; sequence KQVQCTGSNERAKAYLLGTSGV. Residues 125 to 145 form a helical membrane-spanning segment; sequence LFILTGIFVLIPVSWTANIII. Over 146–164 the chain is Extracellular; the sequence is RDFYNPAIHIGQKRELGAA. Residues 165–185 traverse the membrane as a helical segment; it reads LFLGWASAAVLFIGGGLLCGF. Over 186–224 the chain is Cytoplasmic; that stretch reads CCCNRKKQGYRYPVPGYRVPHTDKRRNTTMLSKTSTSYV.

The protein belongs to the claudin family. As to quaternary structure, cannot form tight junction strands on its own. Interacts with OCLN. In terms of tissue distribution, in the kidney, expressed in the proximal tubule and in the Henle's loop. In the distal convoluted tubule, not expressed in all tubules. Not detected in the collecting duct (at protein level).

It localises to the cell junction. It is found in the tight junction. Its subcellular location is the basolateral cell membrane. It carries out the reaction chloride(in) = chloride(out). It catalyses the reaction hydrogencarbonate(in) = hydrogencarbonate(out). The catalysed reaction is bromide(in) = bromide(out). The enzyme catalyses iodide(out) = iodide(in). It carries out the reaction fluoride(in) = fluoride(out). It catalyses the reaction nitrate(in) = nitrate(out). The catalysed reaction is thiocyanate(in) = thiocyanate(out). Its function is as follows. Channel-forming tight junction protein with selectivity for anions, including chloride and hydrogencarbonate, and for solutes smaller than 9 Angstrom in diameter. In the kidney proximal tubule, may be involved in paracellular reabsorption of filtered anions. Does not affect water permeability. The polypeptide is Claudin-17 (CLDN17) (Homo sapiens (Human)).